Consider the following 726-residue polypeptide: Uracil catabolism protein 2 (726 aa).

Residues 24–53 constitute a DNA-binding region (zn(2)-C6 fungal-type); it reads CGVCRKFKTRCDFEPLVGKCHRCNVLRLEC. Disordered regions lie at residues 152–183 and 629–681; these read AGMG…FVNG and SGRL…SGAD. Over residues 161-170 the composition is skewed to acidic residues; sequence YDDDDDGDDD. Positions 640–679 are enriched in polar residues; sequence RGSPSMTPGFQQSVQSSSALQGSKAGSPQSARSVNSQGSG.

Belongs to the URC2 family.

Its subcellular location is the nucleus. Probable transcriptional activator involved in uracil catabolism. The chain is Uracil catabolism protein 2 (URC2) from Lachancea kluyveri (Yeast).